The chain runs to 37 residues: Large ribosomal subunit protein bL36 (37 aa).

Belongs to the bacterial ribosomal protein bL36 family.

This chain is Large ribosomal subunit protein bL36, found in Alkalilimnicola ehrlichii (strain ATCC BAA-1101 / DSM 17681 / MLHE-1).